The chain runs to 1117 residues: PR domain zinc finger protein 10 (1117 aa).

The disordered stretch occupies residues 97–142 (QQTPLGGLEAKEEEDEDEDEDTEEDEEEDGEDADLDDWEPDPPRPF). Positions 107–136 (KEEEDEDEDEDTEEDEEEDGEDADLDDWEP) are enriched in acidic residues. Residues 182–300 (LPLVLYIDRF…PKQELKVWYA (119 aa)) enclose the SET domain. The interval 201–305 (IPKRTQLGPV…KVWYAASYAE (105 aa)) is N-terminal PR domain; essential for transcriptional activator activity. The segment at 329–351 (WPCYECNRRFISSEQLQQHLNSH) adopts a C2H2-type 1 zinc-finger fold. K354 participates in a covalent cross-link: Glycyl lysine isopeptide (Lys-Gly) (interchain with G-Cter in SUMO2). Residues 361–381 (TRGRGRGRGKRRFGPGRRPGR) show a composition bias toward basic residues. A disordered region spans residues 361–386 (TRGRGRGRGKRRFGPGRRPGRPPKFI). At S398 the chain carries Phosphoserine. The residue at position 402 (T402) is a Phosphothreonine. The disordered stretch occupies residues 440–474 (QETQSSLEHEPETHTLHLQPQHEESVVPTQSTLTA). Positions 446–464 (LEHEPETHTLHLQPQHEES) are enriched in basic and acidic residues. 9 consecutive C2H2-type zinc fingers follow at residues 500–522 (FKCLQCGKAFREKDKLDQHLRFH), 530–552 (LTCDLCNKGFISSASLESHMKLH), 558–580 (YSCIFCPESFDRLDLLKDHVAIH), 586–609 (FTCPTCKKRFPDFIQVKKHVRSFH), 614–636 (YQCTECDKAFCRPDKLRLHMLRH), 642–665 (FLCSTCGKQFKRKDKLREHMQRMH), 697–720 (FKCRLCMMGFRRRGMLVNHLSKRH), 742–765 (YFCQYCDKVYKSASKRKAHILKNH), and 804–827 (VCCPHCSKQYSSKTKMVQHIRKKH). The interval 871-1097 (QAMTELSQTL…QTTSQQQTTQ (227 aa)) is C-terminal glutamine-rich region; essential for transcriptional activator activity. 3 disordered regions span residues 919–943 (VAPATSPHQSQQSTVDVGQLHDPQP), 958–1001 (GQPL…SSVQ), and 1066–1094 (QTSALSGGVQVQPPAHSDSLDPQTTSQQQ). A compositionally biased stretch (polar residues) spans 924–934 (SPHQSQQSTVD).

The protein belongs to the class V-like SAM-binding methyltransferase superfamily.

The protein resides in the nucleus. In terms of biological role, transcriptional activator, essential for early embryonic development and survival of embryonic stem cells (ESCs). Supports cell growth and survival during early development by transcriptionally activating the expression of the translation initiation factor EIF3B, to sustain global translation. Activates the transcription of FLNC. This is PR domain zinc finger protein 10 (PRDM10) from Pongo abelii (Sumatran orangutan).